A 617-amino-acid polypeptide reads, in one-letter code: Manganese lipoxygenase (617 aa).

An N-terminal signal peptide occupies residues 1-17 (MRIGLLAFAVAARYVEA). The segment covering 23–48 (GEEVASSSAPTTLPSTSSSSALPSPT) has biased composition (low complexity). Residues 23 to 59 (GEEVASSSAPTTLPSTSSSSALPSPTKYTLPHEDPNP) are disordered. N-linked (GlcNAc...) asparagine glycosylation is found at Asn109, Asn119, and Asn160. Positions 122 to 617 (LRDIQSHGGL…PAVNPFFLSI (496 aa)) constitute a Lipoxygenase domain. Residues His293, His297, His479, and Asn483 each contribute to the Mn(2+) site. The N-linked (GlcNAc...) asparagine glycan is linked to Asn547. Residue Ile617 coordinates Mn(2+).

This sequence belongs to the lipoxygenase family. Manganese lipoxygenase subfamily. Requires Mn(2+) as cofactor.

It localises to the secreted. It carries out the reaction (9Z,12Z)-octadecadienoate + O2 = (9S)-hydroperoxy-(10E,12Z)-octadecadienoate. The catalysed reaction is (9Z,12Z)-octadecadienoate + O2 = (11S)-hydroperoxy-(9Z,12Z)-octadecadienoate. It catalyses the reaction (9Z,12Z)-octadecadienoate + O2 = (13R)-hydroperoxy-(9Z,11E)-octadecadienoate. The enzyme catalyses (9Z,12Z,15Z)-octadecatrienoate + O2 = (9S)-hydroperoxy-(10E,12Z,15Z)-octadecatrienoate. It carries out the reaction (9Z,12Z,15Z)-octadecatrienoate + O2 = (11R)-hydroperoxy-(9Z,12Z,15Z)-octadecatrienoate. The catalysed reaction is (9Z,12Z,15Z)-octadecatrienoate + O2 = (13R)-hydroperoxy-(9Z,11E,15Z)-octadecatrienoate. Its function is as follows. Lipoxygenase that metabolizes linoleic and alpha-linolenic acids to 9S-, 11- and 13R-hydroperoxy fatty acids. At the end of lipoxygenation, the intermediate products 11S-HPODE and 13R-HPODE from linoleic acid are then transformed into 9S-HPODE as the final product. The intermediate product 11R-HPOTrE from alpha-linolenic acid is transformed into 9S-HPOTrE and 13R-HPOTrE as the final products. 9S-HPOTrE is further oxidized by the enzyme to 9,16-DiHOTrE as the end product. Also acts on gamma-linolenic acid producing 9-HOTrE(n-6) as the main metabolite. The protein is Manganese lipoxygenase of Nakataea oryzae (Rice stem rot fungus).